The following is a 155-amino-acid chain: Small ribosomal subunit protein uS7c (155 aa).

This sequence belongs to the universal ribosomal protein uS7 family. As to quaternary structure, part of the 30S ribosomal subunit.

It is found in the plastid. Its subcellular location is the chloroplast. One of the primary rRNA binding proteins, it binds directly to 16S rRNA where it nucleates assembly of the head domain of the 30S subunit. In Yucca glauca (Soapweed yucca), this protein is Small ribosomal subunit protein uS7c (rps7).